Here is a 182-residue protein sequence, read N- to C-terminus: Meiotic recombination protein REC104 (182 aa).

Interacts with REC114 and SPO11.

Functionally, potential transcriptional regulator that is required to activate expression of a number of early meiotic genes including HOP1. This Saccharomyces cerevisiae (strain ATCC 204508 / S288c) (Baker's yeast) protein is Meiotic recombination protein REC104 (REC104).